The primary structure comprises 363 residues: Isopentenyl-diphosphate delta-isomerase (363 aa).

Residue 15 to 16 (RK) coordinates substrate. FMN contacts are provided by residues Ser73, 74 to 76 (SMT), Ser104, and Asn133. Position 104–106 (104–106 (SMR)) interacts with substrate. Gln168 is a substrate binding site. Residue Glu169 participates in Mg(2+) binding. FMN contacts are provided by residues Lys200, Thr230, and 313 to 314 (AG).

The protein belongs to the IPP isomerase type 2 family. As to quaternary structure, homooctamer. Dimer of tetramers. FMN is required as a cofactor. The cofactor is NADPH. Mg(2+) serves as cofactor.

The protein resides in the cytoplasm. The enzyme catalyses isopentenyl diphosphate = dimethylallyl diphosphate. Involved in the biosynthesis of isoprenoids. Catalyzes the 1,3-allylic rearrangement of the homoallylic substrate isopentenyl (IPP) to its allylic isomer, dimethylallyl diphosphate (DMAPP). The polypeptide is Isopentenyl-diphosphate delta-isomerase (Chlorobium phaeobacteroides (strain DSM 266 / SMG 266 / 2430)).